Consider the following 252-residue polypeptide: Imidazole glycerol phosphate synthase subunit HisF (252 aa).

Residues aspartate 11 and aspartate 130 contribute to the active site.

The protein belongs to the HisA/HisF family. Heterodimer of HisH and HisF.

Its subcellular location is the cytoplasm. The catalysed reaction is 5-[(5-phospho-1-deoxy-D-ribulos-1-ylimino)methylamino]-1-(5-phospho-beta-D-ribosyl)imidazole-4-carboxamide + L-glutamine = D-erythro-1-(imidazol-4-yl)glycerol 3-phosphate + 5-amino-1-(5-phospho-beta-D-ribosyl)imidazole-4-carboxamide + L-glutamate + H(+). It participates in amino-acid biosynthesis; L-histidine biosynthesis; L-histidine from 5-phospho-alpha-D-ribose 1-diphosphate: step 5/9. Functionally, IGPS catalyzes the conversion of PRFAR and glutamine to IGP, AICAR and glutamate. The HisF subunit catalyzes the cyclization activity that produces IGP and AICAR from PRFAR using the ammonia provided by the HisH subunit. This is Imidazole glycerol phosphate synthase subunit HisF from Thermococcus kodakarensis (strain ATCC BAA-918 / JCM 12380 / KOD1) (Pyrococcus kodakaraensis (strain KOD1)).